Reading from the N-terminus, the 509-residue chain is Sulfoacetate--CoA ligase (509 aa).

The tract at residues 320 to 340 (AFSNPLDPGQRRIGSIGRPSG) is disordered.

Belongs to the ATP-dependent AMP-binding enzyme family.

It localises to the cytoplasm. It catalyses the reaction sulfoacetate + ATP + CoA = sulfoacetyl-CoA + AMP + diphosphate. Involved in the degradation of sulfoacetate, a widespread natural product. Catalyzes the CoA- and ATP-dependent conversion of sulfoacetate to sulfoacetyl-CoA and AMP. This chain is Sulfoacetate--CoA ligase, found in Cupriavidus necator (strain ATCC 17699 / DSM 428 / KCTC 22496 / NCIMB 10442 / H16 / Stanier 337) (Ralstonia eutropha).